The primary structure comprises 238 residues: 3-dehydroquinate dehydratase (238 aa).

Residues 35-37 (ELR) and Arg-70 contribute to the 3-dehydroquinate site. The active-site Proton donor/acceptor is the His-133. The active-site Schiff-base intermediate with substrate is the Lys-160. Arg-202 and Gln-225 together coordinate 3-dehydroquinate.

The protein belongs to the type-I 3-dehydroquinase family. In terms of assembly, homodimer.

It catalyses the reaction 3-dehydroquinate = 3-dehydroshikimate + H2O. It functions in the pathway metabolic intermediate biosynthesis; chorismate biosynthesis; chorismate from D-erythrose 4-phosphate and phosphoenolpyruvate: step 3/7. In terms of biological role, involved in the third step of the chorismate pathway, which leads to the biosynthesis of aromatic amino acids. Catalyzes the cis-dehydration of 3-dehydroquinate (DHQ) and introduces the first double bond of the aromatic ring to yield 3-dehydroshikimate. The polypeptide is 3-dehydroquinate dehydratase (Staphylococcus aureus (strain MSSA476)).